The chain runs to 196 residues: Large ribosomal subunit protein eL15 (196 aa).

The interval D153–K196 is disordered. Over residues R159–R172 the composition is skewed to basic residues.

Belongs to the eukaryotic ribosomal protein eL15 family.

The chain is Large ribosomal subunit protein eL15 from Methanosarcina acetivorans (strain ATCC 35395 / DSM 2834 / JCM 12185 / C2A).